The following is a 471-amino-acid chain: 3-isopropylmalate dehydratase large subunit (471 aa).

[4Fe-4S] cluster contacts are provided by Cys349, Cys409, and Cys412.

This sequence belongs to the aconitase/IPM isomerase family. LeuC type 1 subfamily. In terms of assembly, heterodimer of LeuC and LeuD. [4Fe-4S] cluster serves as cofactor.

The enzyme catalyses (2R,3S)-3-isopropylmalate = (2S)-2-isopropylmalate. It functions in the pathway amino-acid biosynthesis; L-leucine biosynthesis; L-leucine from 3-methyl-2-oxobutanoate: step 2/4. Catalyzes the isomerization between 2-isopropylmalate and 3-isopropylmalate, via the formation of 2-isopropylmaleate. This is 3-isopropylmalate dehydratase large subunit from Aliivibrio fischeri (strain MJ11) (Vibrio fischeri).